The primary structure comprises 210 residues: Cytochrome c biogenesis ATP-binding export protein CcmA (210 aa).

Residues L3–L205 enclose the ABC transporter domain. G37–T44 is an ATP binding site.

The protein belongs to the ABC transporter superfamily. CcmA exporter (TC 3.A.1.107) family. In terms of assembly, the complex is composed of two ATP-binding proteins (CcmA) and two transmembrane proteins (CcmB).

The protein localises to the cell inner membrane. The catalysed reaction is heme b(in) + ATP + H2O = heme b(out) + ADP + phosphate + H(+). Functionally, part of the ABC transporter complex CcmAB involved in the biogenesis of c-type cytochromes; once thought to export heme, this seems not to be the case, but its exact role is uncertain. Responsible for energy coupling to the transport system. This is Cytochrome c biogenesis ATP-binding export protein CcmA from Pseudomonas putida (strain ATCC 47054 / DSM 6125 / CFBP 8728 / NCIMB 11950 / KT2440).